Here is a 651-residue protein sequence, read N- to C-terminus: Protein RcaC (651 aa).

The Response regulatory 1 domain occupies 2–116 (KILLVEDDDV…ELIARIRALL (115 aa)). The residue at position 51 (D51) is a 4-aspartylphosphate. A DNA-binding region (ompR/PhoB-type) is located at residues 124–223 (FPLLTWGDLL…MHGRGYYLKA (100 aa)). Response regulatory domains are found at residues 384-519 (LLLM…VNLL) and 527-643 (KVMI…LRRL).

In terms of biological role, required for chromatic adaptation. Thought to be a positive regulator of phycobiliproteins. This Microchaete diplosiphon (Fremyella diplosiphon) protein is Protein RcaC (rcaC).